Reading from the N-terminus, the 237-residue chain is Putative N-acetylmannosamine-6-phosphate 2-epimerase (237 aa).

This sequence belongs to the NanE family.

The enzyme catalyses an N-acyl-D-glucosamine 6-phosphate = an N-acyl-D-mannosamine 6-phosphate. The protein operates within amino-sugar metabolism; N-acetylneuraminate degradation; D-fructose 6-phosphate from N-acetylneuraminate: step 3/5. In terms of biological role, converts N-acetylmannosamine-6-phosphate (ManNAc-6-P) to N-acetylglucosamine-6-phosphate (GlcNAc-6-P). In Caldanaerobacter subterraneus subsp. tengcongensis (strain DSM 15242 / JCM 11007 / NBRC 100824 / MB4) (Thermoanaerobacter tengcongensis), this protein is Putative N-acetylmannosamine-6-phosphate 2-epimerase.